An 80-amino-acid chain; its full sequence is U1-nemetoxin-Csp1a (80 aa).

Positions 1–20 (MKYFVVFCVLIIAVAAFTSA) are cleaved as a signal peptide. Positions 21-41 (AEDGEVFEENPLEFPKTIQKR) are excised as a propeptide. 4 cysteine pairs are disulfide-bonded: Cys42-Cys56, Cys49-Cys60, Cys55-Cys77, and Cys66-Cys73.

It belongs to the neurotoxin 13 (insecticidal toxin ABC) family. 02 (Calisoga) subfamily. As to expression, expressed by the venom gland.

Its subcellular location is the secreted. In terms of biological role, causes paralysis to insect larvae (H.virescens). This toxin is active only on insects. The chain is U1-nemetoxin-Csp1a from Calisoga sp. (Spider).